The sequence spans 505 residues: Cytochrome c oxidase subunit 1 (505 aa).

The chain crosses the membrane as a helical span at residues 14-34; the sequence is LLYLVFAFFGGLLGTSLSMLI. Residues glutamate 37 and glycine 42 each contribute to the Ca(2+) site. 6 helical membrane passes run 55–75, 98–118, 143–163, 180–200, 229–249, and 261–281; these read VIITGHGIIMLLFMVMPALFG, NISFWLNPPALALLLLSTLVE, AILSLHLNGLSSILGAVNMLV, LFVWAIALTAVLVILAVPVLA, LFWFFGHPEVYILILPAFGIV, and VFGLTGMICAMGAISLLGFIV. Histidine 60 contributes to the Fe(II)-heme a binding site. Positions 235 and 239 each coordinate Cu cation. The segment at residues 235–239 is a cross-link (1'-histidyl-3'-tyrosine (His-Tyr)); the sequence is HPEVY. Tyrosine 239 provides a ligand contact to O2. The Cu cation site is built by histidine 284 and histidine 285. Transmembrane regions (helical) follow at residues 302 to 322 and 332 to 352; these read ATMIIAVPTGMKIFSWMATIY and MWFAVGFICLFTLGGVTGVVL. Mg(2+) is bound by residues histidine 362 and aspartate 363. Histidine 370 contributes to the heme a3 binding site. Position 372 (histidine 372) interacts with Fe(II)-heme a. The next 3 membrane-spanning stretches (helical) occupy residues 374 to 394, 408 to 428, and 446 to 466; these read VLSMGAVFGIFAGVYFWGNLI, FWLLFIGVNLTFFPQHFLGLA, and AVSSFGASISFISVIVFATTF.

It belongs to the heme-copper respiratory oxidase family. As to quaternary structure, component of the cytochrome c oxidase (complex IV, CIV), a multisubunit enzyme composed of a catalytic core of 3 subunits and several supernumerary subunits. The complex exists as a monomer or a dimer and forms supercomplexes (SCs) in the inner mitochondrial membrane with ubiquinol-cytochrome c oxidoreductase (cytochrome b-c1 complex, complex III, CIII). Requires heme as cofactor. It depends on Cu cation as a cofactor.

Its subcellular location is the mitochondrion inner membrane. It catalyses the reaction 4 Fe(II)-[cytochrome c] + O2 + 8 H(+)(in) = 4 Fe(III)-[cytochrome c] + 2 H2O + 4 H(+)(out). It participates in energy metabolism; oxidative phosphorylation. Its function is as follows. Component of the cytochrome c oxidase, the last enzyme in the mitochondrial electron transport chain which drives oxidative phosphorylation. The respiratory chain contains 3 multisubunit complexes succinate dehydrogenase (complex II, CII), ubiquinol-cytochrome c oxidoreductase (cytochrome b-c1 complex, complex III, CIII) and cytochrome c oxidase (complex IV, CIV), that cooperate to transfer electrons derived from NADH and succinate to molecular oxygen, creating an electrochemical gradient over the inner membrane that drives transmembrane transport and the ATP synthase. Cytochrome c oxidase is the component of the respiratory chain that catalyzes the reduction of oxygen to water. Electrons originating from reduced cytochrome c in the intermembrane space (IMS) are transferred via the dinuclear copper A center (CU(A)) of subunit 2 and heme A of subunit 1 to the active site in subunit 1, a binuclear center (BNC) formed by heme A3 and copper B (CU(B)). The BNC reduces molecular oxygen to 2 water molecules using 4 electrons from cytochrome c in the IMS and 4 protons from the mitochondrial matrix. This Chlamydomonas reinhardtii (Chlamydomonas smithii) protein is Cytochrome c oxidase subunit 1 (COX1).